A 126-amino-acid chain; its full sequence is Fluoride-specific ion channel FluC 1 (126 aa).

3 helical membrane-spanning segments follow: residues 37-57 (HWGT…VLAL), 67-87 (IALL…TFVV), and 98-118 (LLAA…AAAA). Na(+) contacts are provided by glycine 77 and serine 80.

The protein belongs to the fluoride channel Fluc/FEX (TC 1.A.43) family.

The protein resides in the cell inner membrane. The enzyme catalyses fluoride(in) = fluoride(out). With respect to regulation, na(+) is not transported, but it plays an essential structural role and its presence is essential for fluoride channel function. In terms of biological role, fluoride-specific ion channel. Important for reducing fluoride concentration in the cell, thus reducing its toxicity. The protein is Fluoride-specific ion channel FluC 1 of Parasynechococcus marenigrum (strain WH8102).